Reading from the N-terminus, the 633-residue chain is DNA topoisomerase 1 (633 aa).

Positions 6 to 115 (KKYIVVESPA…KNRIVFSEIT (110 aa)) constitute a Toprim domain. The Mg(2+) site is built by Glu-12 and Asp-84. Residues 130–543 (DMKKVRAQLA…EFYESFSSVF (414 aa)) enclose the Topo IA-type catalytic domain. The interaction with DNA stretch occupies residues 164–169 (SAGRVQ). Tyr-288 functions as the O-(5'-phospho-DNA)-tyrosine intermediate in the catalytic mechanism. 2 disulfide bridges follow: Cys-559-Cys-578 and Cys-561-Cys-580. The C4-type zinc-finger motif lies at 559–580 (CSCGKEMRLSFGKYGFYLKCEC). The disordered stretch occupies residues 601–633 (LGRKDSESGSPDGRSVEGKGNLSEKRRKGKKGS).

Belongs to the type IA topoisomerase family. In terms of assembly, monomer. The cofactor is Mg(2+).

The catalysed reaction is ATP-independent breakage of single-stranded DNA, followed by passage and rejoining.. Functionally, releases the supercoiling and torsional tension of DNA, which is introduced during the DNA replication and transcription, by transiently cleaving and rejoining one strand of the DNA duplex. Introduces a single-strand break via transesterification at a target site in duplex DNA. The scissile phosphodiester is attacked by the catalytic tyrosine of the enzyme, resulting in the formation of a DNA-(5'-phosphotyrosyl)-enzyme intermediate and the expulsion of a 3'-OH DNA strand. The free DNA strand then undergoes passage around the unbroken strand, thus removing DNA supercoils. Finally, in the religation step, the DNA 3'-OH attacks the covalent intermediate to expel the active-site tyrosine and restore the DNA phosphodiester backbone. The sequence is that of DNA topoisomerase 1 from Thermotoga maritima (strain ATCC 43589 / DSM 3109 / JCM 10099 / NBRC 100826 / MSB8).